The following is a 296-amino-acid chain: ADP-forming sulfoacetate-CoA ligase subunit SqwL (296 aa).

Residues 17–20 (TGSE), lysine 43, and 96–98 (IAD) each bind CoA. Residue histidine 251 is the Tele-phosphohistidine intermediate of the active site.

It belongs to the succinate/malate CoA ligase alpha subunit family. As to quaternary structure, forms a complex with SqwK.

It catalyses the reaction sulfoacetate + ATP + CoA = sulfoacetyl-CoA + ADP + phosphate. In terms of biological role, part of a variant of the sulfo-TK pathway, a D-sulfoquinovose degradation pathway that produces sulfoacetate. Hydrolyzes sulfoacetyl-coenzyme A (sulfoacetyl-CoA) to produce sulfoacetate and CoA coupled with the phosphorylation of ADP to generate ATP. Cannot use succinate, acetate or 3-hydroxypropionate, and shows only residual activities with malonate and 3-sulfopropanoate. The protein is ADP-forming sulfoacetate-CoA ligase subunit SqwL of Acholeplasma sp.